A 73-amino-acid polypeptide reads, in one-letter code: Translation initiation factor IF-1 (73 aa).

The 73-residue stretch at 1–73 (MAKKDGVIEL…ARGRIVYRYK (73 aa)) folds into the S1-like domain.

It belongs to the IF-1 family. Component of the 30S ribosomal translation pre-initiation complex which assembles on the 30S ribosome in the order IF-2 and IF-3, IF-1 and N-formylmethionyl-tRNA(fMet); mRNA recruitment can occur at any time during PIC assembly.

It localises to the cytoplasm. Functionally, one of the essential components for the initiation of protein synthesis. Stabilizes the binding of IF-2 and IF-3 on the 30S subunit to which N-formylmethionyl-tRNA(fMet) subsequently binds. Helps modulate mRNA selection, yielding the 30S pre-initiation complex (PIC). Upon addition of the 50S ribosomal subunit IF-1, IF-2 and IF-3 are released leaving the mature 70S translation initiation complex. The protein is Translation initiation factor IF-1 of Tropheryma whipplei (strain TW08/27) (Whipple's bacillus).